The sequence spans 262 residues: MQVDLLSSAQSAHALHLFHQHSPLVHCMTNDVVQTFTANTLLALGASPAMVIETEEASQFAAIASALLINVGTLTQPRAQAMSAAVEQATRSQTPWTLDPVAVGALDYRRRFCVELLSHKPTAIRGNASEIMALAGVANGGRGVDTTDAAANAIPAAQTLARETGAIVVVTGEVDYVTDGHRIIGIHGGDPLMTKVVGTGCALSAVVAACCALPGDTLENIASACHWMKQAGERAVARSEGPGSFVPHFLDALWQLTQEVQA.

Position 50 (M50) interacts with substrate. The ATP site is built by R125 and T171. G198 is a binding site for substrate.

The protein belongs to the Thz kinase family. The cofactor is Mg(2+).

It carries out the reaction 5-(2-hydroxyethyl)-4-methylthiazole + ATP = 4-methyl-5-(2-phosphooxyethyl)-thiazole + ADP + H(+). The protein operates within cofactor biosynthesis; thiamine diphosphate biosynthesis; 4-methyl-5-(2-phosphoethyl)-thiazole from 5-(2-hydroxyethyl)-4-methylthiazole: step 1/1. In terms of biological role, catalyzes the phosphorylation of the hydroxyl group of 4-methyl-5-beta-hydroxyethylthiazole (THZ). This chain is Hydroxyethylthiazole kinase, found in Escherichia coli O45:K1 (strain S88 / ExPEC).